A 522-amino-acid polypeptide reads, in one-letter code: Leucine-rich repeat transmembrane neuronal protein 1 (522 aa).

A signal peptide spans 1 to 34 (MDFLLLGLCLHWLLRRPSGVVLCLLGACFQMLPA). Residues 35-63 (APSGCPGQCRCEGRLLYCEALNLTEAPHN) enclose the LRRNT domain. The Extracellular portion of the chain corresponds to 35–427 (APSGCPGQCR…HAENAVQIHK (393 aa)). 2 N-linked (GlcNAc...) asparagine glycosylation sites follow: Asn56 and Asn63. LRR repeat units lie at residues 64–87 (LSGL…QFTG), 89–111 (MQLT…AFQK), 112–135 (LRRV…TFRP), 136–159 (MPNL…LFHG), 161–183 (RKLT…IFQD), 184–207 (CRSL…SFAG), 209–231 (FKLT…HFPR), 233–255 (ISLH…LDWV), 256–278 (WNLE…VFET), and 280–302 (PYLQ…ILNS). Asn130 carries N-linked (GlcNAc...) asparagine glycosylation. The LRRCT domain maps to 314–365 (NLWDCGRNVCALASWLSNFQGRYDANLQCASPEYAQGEDVLDAVYAFHLCED). The N-linked (GlcNAc...) asparagine glycan is linked to Asn381. The chain crosses the membrane as a helical span at residues 428-448 (VVTGTMALIFSFLIVVLVLYV). Residues 449 to 522 (SWKCFPASLR…HQQPARECEV (74 aa)) are Cytoplasmic-facing.

Belongs to the LRRTM family. Expressed predominantly in the nervous system by postmitotic neurons, but also in some non-neuronal tissues. In adult brain expression is most prominent in the forebraain, particularly in the thalamus and in the cortical areas including hippocampus, piriform and posterior cingulate.

It localises to the cell membrane. It is found in the postsynaptic cell membrane. Exhibits strong synaptogenic activity, restricted to excitatory presynaptic differentiation, acting at both pre- and postsynaptic level. The sequence is that of Leucine-rich repeat transmembrane neuronal protein 1 (Lrrtm1) from Mus musculus (Mouse).